Reading from the N-terminus, the 391-residue chain is ATP phosphoribosyltransferase regulatory subunit (391 aa).

Belongs to the class-II aminoacyl-tRNA synthetase family. HisZ subfamily. As to quaternary structure, heteromultimer composed of HisG and HisZ subunits.

It localises to the cytoplasm. The protein operates within amino-acid biosynthesis; L-histidine biosynthesis; L-histidine from 5-phospho-alpha-D-ribose 1-diphosphate: step 1/9. Its function is as follows. Required for the first step of histidine biosynthesis. May allow the feedback regulation of ATP phosphoribosyltransferase activity by histidine. This is ATP phosphoribosyltransferase regulatory subunit from Prochlorococcus marinus (strain SARG / CCMP1375 / SS120).